The sequence spans 226 residues: uncharacterized protein (226 aa).

This is an uncharacterized protein from Caenorhabditis elegans.